Consider the following 669-residue polypeptide: DNA ligase (669 aa).

NAD(+) is bound by residues Asp-34 to Asp-38, Ser-83 to Leu-84, and Glu-114. The active-site N6-AMP-lysine intermediate is the Lys-116. Positions 137, 171, 287, and 311 each coordinate NAD(+). Positions 405, 408, 423, and 428 each coordinate Zn(2+). Residues Asn-591–Lys-669 enclose the BRCT domain.

This sequence belongs to the NAD-dependent DNA ligase family. LigA subfamily. Mg(2+) is required as a cofactor. Mn(2+) serves as cofactor.

It carries out the reaction NAD(+) + (deoxyribonucleotide)n-3'-hydroxyl + 5'-phospho-(deoxyribonucleotide)m = (deoxyribonucleotide)n+m + AMP + beta-nicotinamide D-nucleotide.. Its function is as follows. DNA ligase that catalyzes the formation of phosphodiester linkages between 5'-phosphoryl and 3'-hydroxyl groups in double-stranded DNA using NAD as a coenzyme and as the energy source for the reaction. It is essential for DNA replication and repair of damaged DNA. The chain is DNA ligase from Bacillus cereus (strain 03BB102).